A 231-amino-acid polypeptide reads, in one-letter code: Ribosyldihydronicotinamide dehydrogenase [quinone] (231 aa).

Residues His12, 18–21 (FNGS), and 104–107 (LYWF) each bind FAD. 127 to 129 (FDV) is a substrate binding site. FAD contacts are provided by residues 148–151 (TTGG) and Tyr156. Positions 174 and 178 each coordinate Zn(2+). An FAD-binding site is contributed by Glu194. Ser197 is modified (phosphoserine). Arg201 serves as a coordination point for FAD. Cys223 lines the Zn(2+) pocket.

Belongs to the NAD(P)H dehydrogenase (quinone) family. Homodimer. Requires Zn(2+) as cofactor. The cofactor is FAD.

It localises to the cytoplasm. It catalyses the reaction 1-(beta-D-ribofuranosyl)-1,4-dihydronicotinamide + a quinone + H(+) = beta-nicotinamide D-riboside + a quinol. In terms of biological role, the enzyme apparently serves as a quinone reductase in connection with conjugation reactions of hydroquinones involved in detoxification pathways as well as in biosynthetic processes such as the vitamin K-dependent gamma-carboxylation of glutamate residues in prothrombin synthesis. The sequence is that of Ribosyldihydronicotinamide dehydrogenase [quinone] (Nqo2) from Rattus norvegicus (Rat).